A 245-amino-acid polypeptide reads, in one-letter code: Superoxide dismutase [Mn], mitochondrial (245 aa).

A mitochondrion-targeting transit peptide spans Met1–Ala32. The Mn(2+) site is built by His58, His106, Asp196, and His200.

The protein belongs to the iron/manganese superoxide dismutase family. As to quaternary structure, homotetramer. Mn(2+) is required as a cofactor.

The protein resides in the mitochondrion matrix. It carries out the reaction 2 superoxide + 2 H(+) = H2O2 + O2. Destroys superoxide anion radicals which are normally produced within the cells and which are toxic to biological systems. This Neurospora crassa (strain ATCC 24698 / 74-OR23-1A / CBS 708.71 / DSM 1257 / FGSC 987) protein is Superoxide dismutase [Mn], mitochondrial (sod-2).